The primary structure comprises 248 residues: TPR repeat-containing protein slr0751 (248 aa).

TPR repeat units lie at residues 61-94 (PEAIFAQGVKAGEAGNYAEAVELFSVVLNLSPDS), 95-128 (PETHYNRGLAWERLGNVDQAIADYGRSIALDRYY), 129-162 (IPPYINRGNLYSQQQDHHTAIQDFTQAITYDPNR), and 163-196 (YKAYYNRANSYFQLGQYAQAIADYNRVLVLRPDY).

This Synechocystis sp. (strain ATCC 27184 / PCC 6803 / Kazusa) protein is TPR repeat-containing protein slr0751.